The sequence spans 208 residues: Protein-L-isoaspartate O-methyltransferase (208 aa).

Ser59 is an active-site residue.

This sequence belongs to the methyltransferase superfamily. L-isoaspartyl/D-aspartyl protein methyltransferase family.

The protein localises to the cytoplasm. It carries out the reaction [protein]-L-isoaspartate + S-adenosyl-L-methionine = [protein]-L-isoaspartate alpha-methyl ester + S-adenosyl-L-homocysteine. Its function is as follows. Catalyzes the methyl esterification of L-isoaspartyl residues in peptides and proteins that result from spontaneous decomposition of normal L-aspartyl and L-asparaginyl residues. It plays a role in the repair and/or degradation of damaged proteins. This is Protein-L-isoaspartate O-methyltransferase from Photorhabdus laumondii subsp. laumondii (strain DSM 15139 / CIP 105565 / TT01) (Photorhabdus luminescens subsp. laumondii).